A 416-amino-acid polypeptide reads, in one-letter code: Multifunctional CCA protein (416 aa).

Gly-8 and Arg-11 together coordinate ATP. Positions 8 and 11 each coordinate CTP. The Mg(2+) site is built by Asp-21 and Asp-23. ATP-binding residues include Arg-91, Arg-137, and Arg-140. CTP-binding residues include Arg-91, Arg-137, and Arg-140. Residues 228–329 (TGVHTLMVLA…VKIFDKADFW (102 aa)) enclose the HD domain.

This sequence belongs to the tRNA nucleotidyltransferase/poly(A) polymerase family. Bacterial CCA-adding enzyme type 1 subfamily. Monomer. Can also form homodimers and oligomers. It depends on Mg(2+) as a cofactor. The cofactor is Ni(2+).

It carries out the reaction a tRNA precursor + 2 CTP + ATP = a tRNA with a 3' CCA end + 3 diphosphate. The catalysed reaction is a tRNA with a 3' CCA end + 2 CTP + ATP = a tRNA with a 3' CCACCA end + 3 diphosphate. Its function is as follows. Catalyzes the addition and repair of the essential 3'-terminal CCA sequence in tRNAs without using a nucleic acid template. Adds these three nucleotides in the order of C, C, and A to the tRNA nucleotide-73, using CTP and ATP as substrates and producing inorganic pyrophosphate. tRNA 3'-terminal CCA addition is required both for tRNA processing and repair. Also involved in tRNA surveillance by mediating tandem CCA addition to generate a CCACCA at the 3' terminus of unstable tRNAs. While stable tRNAs receive only 3'-terminal CCA, unstable tRNAs are marked with CCACCA and rapidly degraded. The sequence is that of Multifunctional CCA protein from Shewanella baltica (strain OS185).